Here is a 424-residue protein sequence, read N- to C-terminus: Sulfate adenylyltransferase (424 aa).

This sequence belongs to the sulfate adenylyltransferase family.

The enzyme catalyses sulfate + ATP + H(+) = adenosine 5'-phosphosulfate + diphosphate. It functions in the pathway sulfur metabolism; hydrogen sulfide biosynthesis; sulfite from sulfate: step 1/3. In Desulfatibacillum aliphaticivorans, this protein is Sulfate adenylyltransferase.